Consider the following 248-residue polypeptide: Putative imidazole glycerol phosphate synthase subunit hisF2 (248 aa).

Residue Asp129 is part of the active site.

It belongs to the HisA/HisF family. Heterodimer of HisH and HisF.

It is found in the cytoplasm. It catalyses the reaction 5-[(5-phospho-1-deoxy-D-ribulos-1-ylimino)methylamino]-1-(5-phospho-beta-D-ribosyl)imidazole-4-carboxamide + L-glutamine = D-erythro-1-(imidazol-4-yl)glycerol 3-phosphate + 5-amino-1-(5-phospho-beta-D-ribosyl)imidazole-4-carboxamide + L-glutamate + H(+). Its pathway is amino-acid biosynthesis; L-histidine biosynthesis; L-histidine from 5-phospho-alpha-D-ribose 1-diphosphate: step 5/9. IGPS catalyzes the conversion of PRFAR and glutamine to IGP, AICAR and glutamate. The HisF subunit catalyzes the cyclization activity that produces IGP and AICAR from PRFAR using the ammonia provided by the HisH subunit. The chain is Putative imidazole glycerol phosphate synthase subunit hisF2 (hisF2) from Campylobacter jejuni subsp. jejuni serotype O:2 (strain ATCC 700819 / NCTC 11168).